Reading from the N-terminus, the 360-residue chain is Actin-like protein MamK (360 aa).

ATP-binding positions include Lys-22, 33–34, and Asp-89; that span reads TS. Glu-156 contacts Mg(2+). Residues 177-179, 231-235, and Gly-302 each bind ATP; these read AGT and KEQFS.

The protein belongs to the FtsA/MreB family. MamK subfamily. Forms cytoplasmic filaments. Interacts with MamJ. Forms filaments in the absence of other magnetosome proteins and in E.coli. Filament formation in vitro requires ATP, GTP or a non-hydrolyzable ATP analog.

Its subcellular location is the cytoplasm. The protein resides in the cytoskeleton. It catalyses the reaction ATP + H2O = ADP + phosphate + H(+). Filament dynamics depend partially on MamJ. Functionally, protein with ATPase activity which forms dynamic cytoplasmic filaments that are involved in sorting, concatenating and/or correctly positioning of magnetosomes in the cell. Not absolutely necessary for assembly of short chains. Filaments grow from the both cell poles towards midcell, and are probably disassembled at the other end of the cell, a process known as treadmilling. Polymerizes in the presence of ATP, GTP or a non-hydrolyzable ATP analog. Required for correct segregation and positioning of magnetosomes following cell division. This is Actin-like protein MamK from Magnetospirillum gryphiswaldense (strain DSM 6361 / JCM 21280 / NBRC 15271 / MSR-1).